The sequence spans 363 residues: AA9 family lytic polysaccharide monooxygenase I (363 aa).

An N-terminal signal peptide occupies residues 1 to 19 (MSLFKFAAFVLGTAGSVAG). Residues His-20 and His-105 each coordinate Cu(2+). 2 disulfide bridges follow: Cys-75–Cys-197 and Cys-116–Cys-120. Positions 183 and 192 each coordinate O2. Tyr-194 contacts Cu(2+). Positions 248–257 (GSDSNTATSG) are enriched in polar residues. Disordered stretches follow at residues 248–270 (GSDSNTATSGASPPSTNFSPTTT) and 298–363 (SVSY…RTQS). Over residues 258–270 (ASPPSTNFSPTTT) the composition is skewed to low complexity. Residues 298–307 (SVSYSQTPWP) show a composition bias toward polar residues. Residues 308 to 329 (SSTATEATSASSSAGGSNNGHT) are compositionally biased toward low complexity. The segment covering 342 to 354 (TGKKRSRLNRRRM) has biased composition (basic residues).

This sequence belongs to the polysaccharide monooxygenase AA9 family. Cu(2+) is required as a cofactor.

It localises to the secreted. The enzyme catalyses [(1-&gt;4)-beta-D-glucosyl]n+m + reduced acceptor + O2 = 4-dehydro-beta-D-glucosyl-[(1-&gt;4)-beta-D-glucosyl]n-1 + [(1-&gt;4)-beta-D-glucosyl]m + acceptor + H2O.. Lytic polysaccharide monooxygenase (LPMO) that depolymerizes crystalline and amorphous polysaccharides via the oxidation of scissile alpha- or beta-(1-4)-glycosidic bonds, yielding C1 or C4 oxidation products. Catalysis by LPMOs requires the reduction of the active-site copper from Cu(II) to Cu(I) by a reducing agent and H(2)O(2) or O(2) as a cosubstrate. This Emericella nidulans (strain FGSC A4 / ATCC 38163 / CBS 112.46 / NRRL 194 / M139) (Aspergillus nidulans) protein is AA9 family lytic polysaccharide monooxygenase I.